Reading from the N-terminus, the 220-residue chain is A-type ATP synthase subunit K (220 aa).

Transmembrane regions (helical) follow at residues 5-25 (LILG…GSGI), 63-83 (FLVA…AMFA), 90-110 (LAGL…GAVA), 125-145 (LPET…VGVF), 155-175 (AALG…GQGI), and 195-215 (LVLA…AILI).

This sequence belongs to the V-ATPase proteolipid subunit family. In terms of assembly, the A-type ATPase is composed of subunits A(3), B(3), C, D, E(1 or 2), F, H(2), I and K(x). Subunit K dimerizes and may form higher oligomers.

It localises to the cell membrane. Its function is as follows. Component of the A-type ATP synthase that produces ATP from ADP in the presence of a proton gradient across the membrane. In Methanocaldococcus jannaschii (strain ATCC 43067 / DSM 2661 / JAL-1 / JCM 10045 / NBRC 100440) (Methanococcus jannaschii), this protein is A-type ATP synthase subunit K.